We begin with the raw amino-acid sequence, 833 residues long: Toll-like receptor 4 (833 aa).

An N-terminal signal peptide occupies residues 1-23 (MMPPTRLAGTLIPAMAFLSCLRP). The region spanning 24–54 (ESWDPCVEVVPNITYQCMDLNLHKIPDNIPS) is the LRRNT domain. Topologically, residues 24–632 (ESWDPCVEVV…FRNATCQVRK (609 aa)) are extracellular. An intrachain disulfide couples Cys29 to Cys40. Residue Asn35 is glycosylated (N-linked (GlcNAc...) asparagine). 5 LRR repeats span residues 55 to 76 (STKDLDMSFNPLRNLGSHSFSN), 79 to 100 (ELQVLDLSRCEIQIIEDDAYQG), 103 to 124 (HLSILILTGNPIQRLFPGAFSG), 127 to 148 (SLQTLVAVETNIASLEDFPIGH), and 151 to 172 (TLKELNVAHNLIHSFKLPEYFS). N-linked (GlcNAc...) asparagine glycosylation is present at Asn173. LRR repeat units follow at residues 176–197 (NLEYLDLSNNKIQNIYHKDLQV), 205–225 (NLSLDLSLNPLDFIQPGAFKE), and 227–236 (KLRELTLRSN). An N-linked (GlcNAc...) asparagine glycan is attached at Asn205. N-linked (GlcNAc...) asparagine glycosylation occurs at Asn238. A disulfide bridge links Cys281 with Cys306. Residue Asn309 is glycosylated (N-linked (GlcNAc...) asparagine). 9 LRR repeats span residues 352–373 (PLKELVFSANEVRNAFTQVKLE), 374–394 (SLEFLDLSRNDFSLKSCCSER), 400–420 (RLKHLDLSFNNIITISSNFLG), 423–444 (QLEYLDFQHSSLKQVSDFSVFL), 448–456 (NLRYLDISY), 472–495 (SLQILKMAGNSFQDNFLPNIFMEL), 497–518 (NLTILDLSDCQLEQVSQVAFNS), 521–542 (KLQLLNMSHNHLLSLDTLPYEP), and 545–565 (SLQTLDCSFNRIVASKEQELR). A disulfide bridge connects residues Cys390 and Cys391. N-linked (GlcNAc...) asparagine glycans are attached at residues Asn497 and Asn526. N-linked (GlcNAc...) asparagine glycosylation is found at Asn570 and Asn575. Residues 579–630 (NDFACVCEHQSFLQWVKDQRQLLVEVEQMVCAKPLDMQGMPMLNFRNATCQV) enclose the LRRCT domain. 2 disulfides stabilise this stretch: Cys583–Cys609 and Cys585–Cys628. Asn625 carries an N-linked (GlcNAc...) asparagine glycan. Residues 633 to 653 (TIITGSVFTVLLVFLVVVLVY) traverse the membrane as a helical segment. The Cytoplasmic portion of the chain corresponds to 654–833 (KFYFHLMLLA…PEGMADAEGS (180 aa)). Residues 673–816 (STYDAFVIYS…IFWRRLRKAL (144 aa)) form the TIR domain.

It belongs to the Toll-like receptor family. Belongs to the lipopolysaccharide (LPS) receptor, a multi-protein complex containing at least CD14, LY96 and TLR4. Binding to bacterial LPS leads to homodimerization. Interacts with LY96 via the extracellular domain. Interacts with MYD88 and TIRAP via their respective TIR domains. Interacts with TICAM2. Interacts with NOX4. Interacts with CNPY3 and HSP90B1; this interaction is required for proper folding in the endoplasmic reticulum. Interacts with MAP3K21; this interaction leads to negative regulation of TLR4 signaling. Interacts with CD36, following CD36 stimulation by oxLDL or amyloid-beta 42, and forms a heterodimer with TLR6. The trimeric complex is internalized and triggers inflammatory response. LYN kinase activity facilitates TLR4-TLR6 heterodimerization and signal initiation. Interacts with TICAM1 in response to LPS in a WDFY1-dependent manner. Interacts with WDFY1 in response to LPS. Interacts with SMPDL3B. Interacts with CEACAM1; upon lipopolysaccharide stimulation, forms a complex including TLR4 and the phosphorylated form of SYK and CEACAM1, which in turn, recruits PTPN6 that dephosphorylates SYK, reducing the production of reactive oxygen species (ROS) and lysosome disruption, which in turn, reduces the activity of the inflammasome. Interacts with RFTN1; the interaction occurs in response to lipopolysaccharide stimulation. Interacts with SCIMP; the interaction occurs in response to lipopolysaccharide stimulation and is enhanced by phosphorylation of SCIMP by LYN. This interaction facilitates the phosphorylation of TLR4 by LYN which elicits a selective cytokine response in macrophages. Interacts with TRAF3IP3. Interacts with TREM1; this interaction enhances TLR4-mediated inflammatory response. Interacts with ZG16B/PAUF. Interacts with CD82; this interaction inhibits TLR4-mediated signaling pathway. Post-translationally, phosphorylated on tyrosine residues by LYN after binding lipopolysaccharide. In terms of processing, ubiquitinated by RNF128 via 'Lys-28'-linked polyubiquitin chains, leading to proteasomal degradation.

The protein resides in the cell membrane. It is found in the early endosome. Its subcellular location is the cell projection. The protein localises to the ruffle. In terms of biological role, transmembrane receptor that functions as a pattern recognition receptor recognizing pathogen- and damage-associated molecular patterns (PAMPs and DAMPs) to induce innate immune responses via downstream signaling pathways. At the plasma membrane, cooperates with LY96 to mediate the innate immune response to bacterial lipopolysaccharide (LPS). Also involved in LPS-independent inflammatory responses triggered by free fatty acids, such as palmitate, and Ni(2+). Mechanistically, acts via MYD88, TIRAP and TRAF6, leading to NF-kappa-B activation, cytokine secretion and the inflammatory response. Alternatively, CD14-mediated TLR4 internalization via endocytosis is associated with the initiation of a MYD88-independent signaling via the TICAM1-TBK1-IRF3 axis leading to type I interferon production. In addition to the secretion of proinflammatory cytokines, initiates the activation of NLRP3 inflammasome and formation of a positive feedback loop between autophagy and NF-kappa-B signaling cascade. In complex with TLR6, promotes inflammation in monocytes/macrophages by associating with TLR6 and the receptor CD86. Upon ligand binding, such as oxLDL or amyloid-beta 42, the TLR4:TLR6 complex is internalized and triggers inflammatory response, leading to NF-kappa-B-dependent production of CXCL1, CXCL2 and CCL9 cytokines, via MYD88 signaling pathway, and CCL5 cytokine, via TICAM1 signaling pathway. In myeloid dendritic cells, vesicular stomatitis virus glycoprotein G but not LPS promotes the activation of IRF7, leading to type I IFN production in a CD14-dependent manner. The polypeptide is Toll-like receptor 4 (TLR4) (Felis catus (Cat)).